Reading from the N-terminus, the 406-residue chain is Probable peptidoglycan glycosyltransferase FtsW (406 aa).

9 consecutive transmembrane segments (helical) span residues 22 to 42, 56 to 76, 86 to 106, 116 to 136, 153 to 173, 186 to 206, 280 to 300, 318 to 338, and 352 to 372; these read LWFV…VASA, FFMG…FMML, WGIL…VPGI, WINL…CMVV, LIGF…LLME, VIAL…IVIM, IWVE…FALM, FAGY…IINV, and LPLI…LFVV. Residues 383–397 show a composition bias toward basic and acidic residues; that stretch reads SKGGESEERKRKSDE. The interval 383 to 406 is disordered; it reads SKGGESEERKRKSDESIDDGEALA.

The protein belongs to the SEDS family. FtsW subfamily.

The protein resides in the cell inner membrane. The catalysed reaction is [GlcNAc-(1-&gt;4)-Mur2Ac(oyl-L-Ala-gamma-D-Glu-L-Lys-D-Ala-D-Ala)](n)-di-trans,octa-cis-undecaprenyl diphosphate + beta-D-GlcNAc-(1-&gt;4)-Mur2Ac(oyl-L-Ala-gamma-D-Glu-L-Lys-D-Ala-D-Ala)-di-trans,octa-cis-undecaprenyl diphosphate = [GlcNAc-(1-&gt;4)-Mur2Ac(oyl-L-Ala-gamma-D-Glu-L-Lys-D-Ala-D-Ala)](n+1)-di-trans,octa-cis-undecaprenyl diphosphate + di-trans,octa-cis-undecaprenyl diphosphate + H(+). The protein operates within cell wall biogenesis; peptidoglycan biosynthesis. Its function is as follows. Peptidoglycan polymerase that is essential for cell division. The sequence is that of Probable peptidoglycan glycosyltransferase FtsW from Marinomonas mediterranea (strain ATCC 700492 / JCM 21426 / NBRC 103028 / MMB-1).